A 264-amino-acid chain; its full sequence is 3-methyl-2-oxobutanoate hydroxymethyltransferase (264 aa).

The Mg(2+) site is built by Asp45 and Asp84. Residues 45–46, Asp84, and Lys112 each bind 3-methyl-2-oxobutanoate; that span reads DS. Glu114 contributes to the Mg(2+) binding site. Glu181 functions as the Proton acceptor in the catalytic mechanism.

This sequence belongs to the PanB family. As to quaternary structure, homodecamer; pentamer of dimers. Requires Mg(2+) as cofactor.

The protein resides in the cytoplasm. The catalysed reaction is 3-methyl-2-oxobutanoate + (6R)-5,10-methylene-5,6,7,8-tetrahydrofolate + H2O = 2-dehydropantoate + (6S)-5,6,7,8-tetrahydrofolate. It participates in cofactor biosynthesis; (R)-pantothenate biosynthesis; (R)-pantoate from 3-methyl-2-oxobutanoate: step 1/2. Functionally, catalyzes the reversible reaction in which hydroxymethyl group from 5,10-methylenetetrahydrofolate is transferred onto alpha-ketoisovalerate to form ketopantoate. This is 3-methyl-2-oxobutanoate hydroxymethyltransferase from Shewanella halifaxensis (strain HAW-EB4).